A 70-amino-acid chain; its full sequence is Phycocyanin-645 alpha-2 chain (70 aa).

(2R,3E)-phycocyanobilin is bound at residue Arg16. Cys18, Tyr26, and Lys41 together coordinate mesobiliverdin.

Belongs to the phycoerythrin family. As to quaternary structure, heterotetramer of 2 different alpha chains and 2 identical beta chains which form 2 alpha-beta heterodimers within the heterotetramer. Contains one phycocyanobilin chromophore, one mesobiliverdin chromophore and one 15,16-dihydrobiliverdin chromophore with binding mediated by both the alpha and beta subunits.

The protein resides in the plastid. It localises to the chloroplast thylakoid membrane. In terms of biological role, light-harvesting photosynthetic tetrapyrrole chromophore-protein from the phycobiliprotein complex. The protein is Phycocyanin-645 alpha-2 chain of Chroomonas sp.